The chain runs to 324 residues: MDSNELPVLAYKDGENSVAPIPAHEQQLPTVTAEPWLEISKQGLQLEGLCFDRQGNLLLCEVFGGTIFHVNLPDKKVTELFKSHKQNPAAVKIHKDGRLFVCYLGDFESTGGIFMVDADGNDAQDIVSDIGTEYCIDDPVFDSKGGFYFTDFRGYSTNLKGGVYYVSPDFKSITPVIQNLAVANGVALSTDEKTLWVTETNANRLHRIDLLEDGVTIAPFGASIPYYFTGHEGPDSCCIDSDDNLYVAMYGQGKVLVFNKKGSPIGQILMPGRDQGHMLRSTHPAFIPGTDQLIICANDIENDGGSWIYTVKAFAKGHQSYQFH.

Residues Glu47, Ser109, Gly111, Asp129, Thr132, Tyr134, Asp137, Asn184, Asp235, and Ser236 each contribute to the Ca(2+) site. Asp235 acts as the Proton donor in catalysis.

It belongs to the SMP-30/CGR1 family. Ca(2+) is required as a cofactor.

It localises to the cytoplasm. Exhibits lactonase activity. Acts in cells with perturbed membrane integrity and is possibly related to the membrane homeostasis. In Staphylococcus saprophyticus subsp. saprophyticus (strain ATCC 15305 / DSM 20229 / NCIMB 8711 / NCTC 7292 / S-41), this protein is Lactonase drp35 (drp35).